The primary structure comprises 394 residues: Guanine nucleotide-binding protein G(s) subunit alpha isoforms short (394 aa).

Positions 1–23 (MGCLGNSKTEDQRNEEKAQREAN) are disordered. Gly2 is lipidated: N-palmitoyl glycine. Residue Cys3 is the site of S-palmitoyl cysteine attachment. The span at 8–23 (KTEDQRNEEKAQREAN) shows a compositional bias: basic and acidic residues. The G-alpha domain maps to 39–394 (ATHRLLLLGA…RMHLRQYELL (356 aa)). Residues 42-55 (RLLLLGAGESGKST) are G1 motif. Position 47–55 (47–55 (GAGESGKST)) interacts with GTP. Ser54 serves as a coordination point for Mg(2+). Residues 68–90 (FNGEGGEEDPQAARSNSDGEKAT) form a disordered region. The G2 motif stretch occupies residues 196-204 (DLLRCRVLT). GTP-binding positions include 197 to 204 (LLRCRVLT), 223 to 227 (DVGGQ), and 292 to 295 (NKQD). A Mg(2+)-binding site is contributed by Thr204. Residues 219 to 228 (FHMFDVGGQR) are G3 motif. Residues 288–295 (ILFLNKQD) are G4 motif. Lys300 is covalently cross-linked (Glycyl lysine isopeptide (Lys-Gly) (interchain with G-Cter in ubiquitin)). Ser352 carries the post-translational modification Phosphoserine. The G5 motif stretch occupies residues 364 to 369 (TCAVDT). Position 366 (Ala366) interacts with GTP.

The protein belongs to the G-alpha family. G(s) subfamily. Heterotrimeric G proteins are composed of 3 units; alpha, beta and gamma. The alpha chain contains the guanine nucleotide binding site. Component of the TAS2R14-GNAS2 complex, consisting of TAS2R14, GNAS2, GNB1 and GNG2; within the complex interacts with TAS2R14; this complex plays a role in the perception of bitterness. Interacts with CRY1; the interaction may block GPCR-mediated regulation of cAMP concentrations. Interacts with ADCY6 and stimulates its adenylyl cyclase activity. Interacts with ADCY2 and ADCY5. Interacts (GDP-bound form) with RIC8B; promoting GNAS folding and association with the plasma membrane. Stimulates the ADCY5 adenylyl cyclase activity. Interaction with SASH1. Interacts with GASL2L2.

The protein localises to the cell membrane. The enzyme catalyses GTP + H2O = GDP + phosphate + H(+). In terms of biological role, guanine nucleotide-binding proteins (G proteins) function as transducers in numerous signaling pathways controlled by G protein-coupled receptors (GPCRs). The alpha chain contains the guanine nucleotide binding site and alternates between an active, GTP-bound state and an inactive, GDP-bound state. Signaling by an activated GPCR promotes GDP release and GTP binding. The alpha subunit has a low GTPase activity that converts bound GTP to GDP, thereby terminating the signal. Both GDP release and GTP hydrolysis are modulated by numerous regulatory proteins. Signaling involves the activation of adenylyl cyclases, resulting in increased levels of the signaling molecule cAMP. Functions downstream of beta-adrenergic receptors. Stimulates the Ras signaling pathway via RAPGEF2. This chain is Guanine nucleotide-binding protein G(s) subunit alpha isoforms short (Gnas), found in Mus musculus (Mouse).